The primary structure comprises 130 residues: Chaperone protein SycT (130 aa).

As to quaternary structure, binds to YopT.

Functionally, functions as a specific chaperone for YopT. The chain is Chaperone protein SycT (sycT) from Yersinia enterocolitica serotype O:8 / biotype 1B (strain NCTC 13174 / 8081).